The following is a 689-amino-acid chain: FAST kinase domain-containing protein 2, mitochondrial (689 aa).

Residues serine 113 and serine 126 each carry the phosphoserine modification. The 58-residue stretch at 617 to 674 (VAVLCVPKSVYCLNSCHPRGLMAMKIRHLNVMGFHVILIHNWELKKLKMEDAVTFVRK) folds into the RAP domain.

It belongs to the FAST kinase family. In terms of assembly, monomer. Found in a complex with GRSF1, DDX28, DHX30 and FASTKD5. Associates with the 16S mitochondrial rRNA (16S mt-rRNA). Forms a regulatory protein-RNA complex, consisting of RCC1L, NGRN, RPUSD3, RPUSD4, TRUB2, FASTKD2 and 16S mt-rRNA. In terms of tissue distribution, ubiquitously expressed. Expression detected in spleen, testis, colon, heart, smooth muscle, kidney, brain, lung, liver, brown and white adipose tissue with highest expression in testis, heart and smooth muscle.

The protein resides in the mitochondrion matrix. It is found in the mitochondrion nucleoid. Plays an important role in assembly of the mitochondrial large ribosomal subunit. As a component of a functional protein-RNA module, consisting of RCC1L, NGRN, RPUSD3, RPUSD4, TRUB2, FASTKD2 and 16S mitochondrial ribosomal RNA (16S mt-rRNA), controls 16S mt-rRNA abundance and is required for intra-mitochondrial translation. May play a role in mitochondrial apoptosis. The protein is FAST kinase domain-containing protein 2, mitochondrial (Fastkd2) of Mus musculus (Mouse).